An 835-amino-acid polypeptide reads, in one-letter code: Pre-mRNA-splicing factor SYF1 (835 aa).

10 HAT repeats span residues 7-38 (YILD…HWEA), 46-77 (RSAR…WFRR), 313-348 (ADFD…FEQA), 414-456 (EDFD…VYWS), 458-494 (KSYE…NEFQ), 517-551 (SIID…LLES), 589-623 (NNLH…EVME), 628-664 (ATKE…FEIH), 707-741 (LGPD…LEMS), and 743-777 (SDYT…FELE).

It belongs to the crooked-neck family. Associated with the spliceosome.

It is found in the nucleus. Its function is as follows. Involved in pre-mRNA splicing and cell cycle progression. The polypeptide is Pre-mRNA-splicing factor SYF1 (SYF1) (Candida glabrata (strain ATCC 2001 / BCRC 20586 / JCM 3761 / NBRC 0622 / NRRL Y-65 / CBS 138) (Yeast)).